The primary structure comprises 219 residues: Albonoursin synthase (219 aa).

It belongs to the nitroreductase family. In terms of assembly, homomer. It depends on FMN as a cofactor. The N-terminus is blocked.

The protein localises to the cytoplasm. The catalysed reaction is cyclo(L-phenylalanyl-L-leucyl) + 2 O2 = albonoursin + 2 H2O2. In terms of biological role, involved in the biosynthesis of albonoursin (cyclo[(alpha,beta-dehydro-Phe)-(alpha,beta-dehydro-Leu)]), an antibacterial peptide. Catalyzes the formation of alpha,beta-dehydro-Phe (DPhe) and alpha,beta-dehydro-Leu (DLeu) residues during the biosynthesis of albonoursin. The catalytic reaction of cyclo(L-Phe-L-Leu) occurs in a two-step sequential alpha-beta-dehydrogenation leading first to cyclo(alpha,beta-dehydro-Phe-L-Leu) and finally to albonoursin. Can also use cyclo(L-Phe-L-His), cyclo(L-Trp-L-Trp), cyclo(L-Leu-L-Ala), cyclo(L-Phe-Gly), cyclo(L-Leu-Gly), cyclo(L-Ser-Gly) and cyclo(L-Glu-Gly) as substrate suggesting that the diketopiperazine ring is essential for the enzymatic reaction. The protein is Albonoursin synthase (albA) of Streptomyces noursei (Streptomyces albulus).